The sequence spans 407 residues: Tryptophan synthase beta chain (407 aa).

Position 98 is an N6-(pyridoxal phosphate)lysine (lysine 98).

Belongs to the TrpB family. In terms of assembly, tetramer of two alpha and two beta chains. Pyridoxal 5'-phosphate is required as a cofactor.

It catalyses the reaction (1S,2R)-1-C-(indol-3-yl)glycerol 3-phosphate + L-serine = D-glyceraldehyde 3-phosphate + L-tryptophan + H2O. It participates in amino-acid biosynthesis; L-tryptophan biosynthesis; L-tryptophan from chorismate: step 5/5. In terms of biological role, the beta subunit is responsible for the synthesis of L-tryptophan from indole and L-serine. This chain is Tryptophan synthase beta chain, found in Bradyrhizobium sp. (strain ORS 278).